Here is a 224-residue protein sequence, read N- to C-terminus: Cysteine-rich hydrophobic domain-containing protein 1 (224 aa).

The tract at residues Met-1–His-80 is disordered. Residues Thr-13–Ala-25 show a composition bias toward acidic residues. The span at Ala-26 to Gly-40 shows a compositional bias: low complexity. Residues Pro-41–Ala-69 show a composition bias toward acidic residues. The stretch at Asp-42–Pro-70 forms a coiled coil.

The protein belongs to the CHIC family. Post-translationally, palmitoylated. Equally expressed in various parts of the brain.

The protein localises to the cell membrane. The protein resides in the cytoplasmic vesicle. In Homo sapiens (Human), this protein is Cysteine-rich hydrophobic domain-containing protein 1 (CHIC1).